We begin with the raw amino-acid sequence, 1076 residues long: Isoleucine--tRNA ligase (1076 aa).

The short motif at 47–57 (PYTTGQIHLGT) is the 'HIGH' region element. The 'KMSKS' region signature appears at 591-595 (KMSKS). K594 is an ATP binding site.

It belongs to the class-I aminoacyl-tRNA synthetase family. IleS type 2 subfamily. Monomer. It depends on Zn(2+) as a cofactor.

Its subcellular location is the cytoplasm. It catalyses the reaction tRNA(Ile) + L-isoleucine + ATP = L-isoleucyl-tRNA(Ile) + AMP + diphosphate. Functionally, catalyzes the attachment of isoleucine to tRNA(Ile). As IleRS can inadvertently accommodate and process structurally similar amino acids such as valine, to avoid such errors it has two additional distinct tRNA(Ile)-dependent editing activities. One activity is designated as 'pretransfer' editing and involves the hydrolysis of activated Val-AMP. The other activity is designated 'posttransfer' editing and involves deacylation of mischarged Val-tRNA(Ile). This Methanoregula boonei (strain DSM 21154 / JCM 14090 / 6A8) protein is Isoleucine--tRNA ligase.